The primary structure comprises 697 residues: Methionine--tRNA ligase (697 aa).

A 'HIGH' region motif is present at residues 12-22; the sequence is PYANGHFHIGH. Zn(2+)-binding residues include C143, C146, C156, and C159. Residues 342–346 carry the 'KMSKS' region motif; it reads KMSKS. K345 is an ATP binding site. The interval 557–577 is disordered; the sequence is FEPPAEPSPQTSPAAAGAGAV. A tRNA-binding domain is found at 591–697; sequence DFTKIDLRLA…PGAVPGLRVR (107 aa).

This sequence belongs to the class-I aminoacyl-tRNA synthetase family. MetG type 1 subfamily. Homodimer. Zn(2+) is required as a cofactor.

Its subcellular location is the cytoplasm. It carries out the reaction tRNA(Met) + L-methionine + ATP = L-methionyl-tRNA(Met) + AMP + diphosphate. Functionally, is required not only for elongation of protein synthesis but also for the initiation of all mRNA translation through initiator tRNA(fMet) aminoacylation. The sequence is that of Methionine--tRNA ligase from Methylibium petroleiphilum (strain ATCC BAA-1232 / LMG 22953 / PM1).